A 191-amino-acid polypeptide reads, in one-letter code: Programmed cell death protein 6 (191 aa).

Residue Ala2 is modified to N-acetylalanine. EF-hand domains are found at residues Pro23 to Thr58, Pro59 to Trp89, Lys90 to Arg125, Leu126 to Leu161, and Thr162 to Val191. Residues Asp36, Asp38, Ser40, Val42, and Glu47 each coordinate Ca(2+). Ca(2+) is bound by residues Asp103, Asp105, Ser107, Met109, and Glu114. 4 residues coordinate Mg(2+): Asp169, Asp171, Asp173, and Trp175.

Homodimer and heterodimer; heterodimerizes (via the EF-hand 5) with PEF1. Isoform 1 and isoform 2 self-associate; probably forming homodimers. Interacts with CPNE4 (via VWFA domain). Interacts with PDCD6IP; the interaction is calcium-dependent. Interacts with RBM22. Interacts with PLSCR4. Interacts with ANXA7 and TSG101. Interacts with DAPK1. Interacts with SEC31A; the interaction is calcium-dependent and promotes monoubiquitination of SEC31A. Interacts with ANXA11 (via N-terminus); the interaction is calcium-dependent. Interacts with PLSCR3 (via N-terminus); the interaction is calcium-dependent. Interacts with MCOLN1; the interaction is calcium-dependent. Interacts with KDR; the interaction is calcium-dependent. Interacts with HEBP2; the interaction is calcium-dependent. Interacts with TFG. Isoform 1: Interacts with SHISA5, leading to stabilize it. Isoform 2: Does not interact with SHISA5. Isoform 2: Does not interact with PDCD6IP, TSG101, ANXA7 and ANXA11.

It is found in the endoplasmic reticulum membrane. It localises to the cytoplasmic vesicle. The protein localises to the COPII-coated vesicle membrane. Its subcellular location is the cytoplasm. The protein resides in the nucleus. It is found in the endosome. Functionally, calcium sensor that plays a key role in processes such as endoplasmic reticulum (ER)-Golgi vesicular transport, endosomal biogenesis or membrane repair. Acts as an adapter that bridges unrelated proteins or stabilizes weak protein-protein complexes in response to calcium: calcium-binding triggers exposure of apolar surface, promoting interaction with different sets of proteins thanks to 3 different hydrophobic pockets, leading to translocation to membranes. Involved in ER-Golgi transport by promoting the association between PDCD6IP and TSG101, thereby bridging together the ESCRT-III and ESCRT-I complexes. Together with PEF1, acts as a calcium-dependent adapter for the BCR(KLHL12) complex, a complex involved in ER-Golgi transport by regulating the size of COPII coats. In response to cytosolic calcium increase, the heterodimer formed with PEF1 interacts with, and bridges together the BCR(KLHL12) complex and SEC31 (SEC31A or SEC31B), promoting monoubiquitination of SEC31 and subsequent collagen export, which is required for neural crest specification. Involved in the regulation of the distribution and function of MCOLN1 in the endosomal pathway. Promotes localization and polymerization of TFG at endoplasmic reticulum exit site. Required for T-cell receptor-, Fas-, and glucocorticoid-induced apoptosis. May mediate Ca(2+)-regulated signals along the death pathway: interaction with DAPK1 can accelerate apoptotic cell death by increasing caspase-3 activity. Its role in apoptosis may however be indirect, as suggested by knockout experiments. May inhibit KDR/VEGFR2-dependent angiogenesis; the function involves inhibition of VEGF-induced phosphorylation of the Akt signaling pathway. Its function is as follows. Has a lower Ca(2+) affinity than isoform 1. The sequence is that of Programmed cell death protein 6 (Pdcd6) from Mus musculus (Mouse).